Here is a 241-residue protein sequence, read N- to C-terminus: Translation initiation factor IF-3 (241 aa).

The disordered stretch occupies residues 178–241 (KKTEAMAEAR…EAPAEASTEA (64 aa)). The span at 180 to 197 (TEAMAEAREAQAARKAEA) shows a compositional bias: basic and acidic residues. Residues 208–229 (ADEDIPEGELPEGEVPEAETTE) show a composition bias toward acidic residues. The span at 230–241 (AAEAPAEASTEA) shows a compositional bias: low complexity.

This sequence belongs to the IF-3 family. In terms of assembly, monomer.

The protein resides in the cytoplasm. Its function is as follows. IF-3 binds to the 30S ribosomal subunit and shifts the equilibrium between 70S ribosomes and their 50S and 30S subunits in favor of the free subunits, thus enhancing the availability of 30S subunits on which protein synthesis initiation begins. In Streptomyces avermitilis (strain ATCC 31267 / DSM 46492 / JCM 5070 / NBRC 14893 / NCIMB 12804 / NRRL 8165 / MA-4680), this protein is Translation initiation factor IF-3.